We begin with the raw amino-acid sequence, 377 residues long: RIB43A-like with coiled-coils protein 2 (377 aa).

Coiled-coil stretches lie at residues 217-250 (NKNQ…LRGD) and 282-308 (EEIR…RDMD).

This sequence belongs to the RIB43A family. As to quaternary structure, microtubule inner protein component of sperm flagellar doublet microtubules. As to expression, expressed in trachea multiciliated cells.

The protein localises to the cytoplasm. The protein resides in the cytoskeleton. It is found in the cilium axoneme. It localises to the flagellum axoneme. Its function is as follows. Microtubule inner protein (MIP) part of the dynein-decorated doublet microtubules (DMTs) in cilia axoneme, which is required for motile cilia beating. This is RIB43A-like with coiled-coils protein 2 from Bos taurus (Bovine).